A 692-amino-acid polypeptide reads, in one-letter code: MAREFSLAKTRNIGIMAHVDAGKTTTTERILYYTGKIHKIGETHEGASQMDWMEQEQERGITITSAATTAQWDGHRVNIIDTPGHVDFTIEVQRSLRVLDGAVTVLDSQSGVEPQTETVWRQATEYGVPRIVFANKMDKIGADFLYSVQTLHDRLQANAHPIQLPIGAEDDFRGIIDLIKMKAEIYTNDLGTDILEEDIPEEYLEQAQEYREKLIEAVAETDEDLMMKYLEGEEITNDELIAGIRKATINVEFFPVLCGSAFKNKGVQLMLDAVIAYLPSPLDIPAIKGVNPDTDAEEERPASDEEPFAALAFKIMTDPFVGRLTFFRVYSGVLNSGSYVMNTSKGKRERIGRILQMHANSRQEIETVYAGDIAAAVGLKDTTTGDSLTDEKAKVILESIEVPEPVIQLMVEPKSKADQDKMGVALQKLAEEDPTFRVETNVETGETVIAGMGELHLDVLVDRMKREFKVEANVGAPQVSYRETFRASTQARGFFKRQSGGKGQFGDVWIEFTPNEEGKGFEFENAIVGGVVPREFIPAVEKGLIESMANGVLAGYPMVDVKAKLYDGSYHDVDSSETAFKIAASLALKEAAKSAQPAILEPMMLVTITAPEDNLGDVMGHVTARRGRVDGMEAHGNSQIVRAYVPLAEMFGYATVLRSATQGRGTFMMVFDHYEDVPKSVQEEIIKKNKGE.

The region spanning 8–282 (AKTRNIGIMA…AVIAYLPSPL (275 aa)) is the tr-type G domain. GTP contacts are provided by residues 17–24 (AHVDAGKT), 81–85 (DTPGH), and 135–138 (NKMD).

Belongs to the TRAFAC class translation factor GTPase superfamily. Classic translation factor GTPase family. EF-G/EF-2 subfamily.

The protein localises to the cytoplasm. Its function is as follows. Catalyzes the GTP-dependent ribosomal translocation step during translation elongation. During this step, the ribosome changes from the pre-translocational (PRE) to the post-translocational (POST) state as the newly formed A-site-bound peptidyl-tRNA and P-site-bound deacylated tRNA move to the P and E sites, respectively. Catalyzes the coordinated movement of the two tRNA molecules, the mRNA and conformational changes in the ribosome. The chain is Elongation factor G (fus) from Streptococcus pyogenes serotype M1.